Reading from the N-terminus, the 309-residue chain is Ribonuclease Z (309 aa).

Residues H63, H65, D67, H68, H145, D216, and H274 each coordinate Zn(2+). The Proton acceptor role is filled by D67.

This sequence belongs to the RNase Z family. In terms of assembly, homodimer. The cofactor is Zn(2+).

The enzyme catalyses Endonucleolytic cleavage of RNA, removing extra 3' nucleotides from tRNA precursor, generating 3' termini of tRNAs. A 3'-hydroxy group is left at the tRNA terminus and a 5'-phosphoryl group is left at the trailer molecule.. Its function is as follows. Zinc phosphodiesterase, which displays some tRNA 3'-processing endonuclease activity. Probably involved in tRNA maturation, by removing a 3'-trailer from precursor tRNA. This is Ribonuclease Z from Streptococcus equi subsp. equi (strain 4047).